Here is a 932-residue protein sequence, read N- to C-terminus: Probable UDP-N-acetylglucosamine--peptide N-acetylglucosaminyltransferase SPINDLY (932 aa).

Residues 1–15 (MAWTEKDVENGKESD) show a composition bias toward basic and acidic residues. Residues 1 to 39 (MAWTEKDVENGKESDSLGNNGFLKGVQSSSDSKGSPVRI) are disordered. TPR repeat units follow at residues 48-81 (GKDAITYANILRSRNKFVDALAIYESVLQKDSGS), 82-115 (IESLIGKGICLQMQNMGRLAFESFAEAIKLDPQN), 116-149 (ACALTHCGILYKDEGRLVEAAESYQKALKADPSY), 157-190 (AIVLTDIGTSLKLAGNSQEGIQKYYEAIKIDSHY), 191-224 (APAYYNLGVVYSEMMQYDMALNCYEKAAIERPMY), 225-258 (AEAYCNMGVIYKNRGDLESAIACYERCLAVSPNF), 266-299 (AIALTDLGTKVKLEGDINQGVAYYKKALYYNWHY), 300-333 (ADAMYNLGVAYGEMLKFDMAIVFYELAFHFNPHC), 334-367 (AEACNNLGVIYKDRDNLDKAVECYQMALTIKPNF), 369-401 (QSLNNLGVVYTVQGKMDAAASMIEKAIIANPTY), and 402-435 (AEAYNNLGVLYRDAGNISLAIEAYEQCLKIDPDS). A catalytic region region spans residues 436-932 (RNAGQNRLLA…NQAGNPGKQS (497 aa)). Residues 881-902 (VSPIEKTRISASKDGPIKENGF) are disordered.

This sequence belongs to the glycosyltransferase 41 family. O-GlcNAc transferase subfamily. As to expression, expressed in stems, leaves and flowers. Expressed during all stages of corolla maturation.

It is found in the nucleus. It carries out the reaction L-seryl-[protein] + UDP-N-acetyl-alpha-D-glucosamine = 3-O-(N-acetyl-beta-D-glucosaminyl)-L-seryl-[protein] + UDP + H(+). The enzyme catalyses L-threonyl-[protein] + UDP-N-acetyl-alpha-D-glucosamine = 3-O-(N-acetyl-beta-D-glucosaminyl)-L-threonyl-[protein] + UDP + H(+). It participates in protein modification; protein glycosylation. Its function is as follows. Probable O-linked N-acetylglucosamine transferase (OGT) involved in various processes such as gibberellin (GA) signaling pathway. OGTs catalyze the addition of nucleotide-activated sugars directly onto the polypeptide through O-glycosidic linkage with the hydroxyl of serine or threonine. Probably acts by adding O-linked sugars to yet unknown proteins. This chain is Probable UDP-N-acetylglucosamine--peptide N-acetylglucosaminyltransferase SPINDLY (SPY), found in Petunia hybrida (Petunia).